A 70-amino-acid chain; its full sequence is DNA-directed RNA polymerase subunit omega (70 aa).

The protein belongs to the RNA polymerase subunit omega family. The RNAP catalytic core consists of 2 alpha, 1 beta, 1 beta' and 1 omega subunit. When a sigma factor is associated with the core the holoenzyme is formed, which can initiate transcription.

It catalyses the reaction RNA(n) + a ribonucleoside 5'-triphosphate = RNA(n+1) + diphosphate. Promotes RNA polymerase assembly. Latches the N- and C-terminal regions of the beta' subunit thereby facilitating its interaction with the beta and alpha subunits. The protein is DNA-directed RNA polymerase subunit omega of Pelobacter propionicus (strain DSM 2379 / NBRC 103807 / OttBd1).